The primary structure comprises 141 residues: Large ribosomal subunit protein uL11 (141 aa).

Belongs to the universal ribosomal protein uL11 family. In terms of assembly, part of the ribosomal stalk of the 50S ribosomal subunit. Interacts with L10 and the large rRNA to form the base of the stalk. L10 forms an elongated spine to which L12 dimers bind in a sequential fashion forming a multimeric L10(L12)X complex. Post-translationally, one or more lysine residues are methylated.

Its function is as follows. Forms part of the ribosomal stalk which helps the ribosome interact with GTP-bound translation factors. The chain is Large ribosomal subunit protein uL11 from Kosmotoga olearia (strain ATCC BAA-1733 / DSM 21960 / TBF 19.5.1).